A 72-amino-acid polypeptide reads, in one-letter code: Sperm protein associated with the nucleus on the X chromosome N1 (72 aa).

The tract at residues 1-40 (MEKPTSSTNGEKRKSPCDSNSKNDEMQETPNRDLVLEPSL) is disordered. A compositionally biased stretch (basic and acidic residues) spans 10-35 (GEKRKSPCDSNSKNDEMQETPNRDLV).

The protein belongs to the SPAN-X family.

In Pan troglodytes (Chimpanzee), this protein is Sperm protein associated with the nucleus on the X chromosome N1 (SPANXN1).